Reading from the N-terminus, the 559-residue chain is Alpha-(1,6)-fucosyltransferase (559 aa).

Residues 1–4 are Cytoplasmic-facing; the sequence is MLKC. The helical; Signal-anchor for type II membrane protein transmembrane segment at 5 to 24 threads the bilayer; it reads IAAVGTVVWMTMFLFLYSQL. Topologically, residues 25-559 are lumenal; sequence SNNQSGGDSI…RKFKFEALLD (535 aa). N27 carries an N-linked (GlcNAc...) asparagine glycan. The segment covering 63 to 74 has biased composition (basic and acidic residues); it reads QERNDQHKKIME. The disordered stretch occupies residues 63 to 90; it reads QERNDQHKKIMEQSHQLPPNPENPSLPK. Residues 80–90 are compositionally biased toward pro residues; sequence PPNPENPSLPK. The N-linked (GlcNAc...) asparagine glycan is linked to N134. Intrachain disulfides connect C188/C251, C196/C214, and C202/C206. The 291-residue stretch at 190-480 folds into the GT23 domain; the sequence is EAKTLVCNLD…ADDGSKFHSL (291 aa). Residues 351–352 are important for donor substrate binding; sequence RR. A disulfide bridge connects residues C452 and C459. One can recognise an SH3 domain in the interval 489–550; sequence QQAHEVIVIE…PSYKVVNDWR (62 aa).

It belongs to the glycosyltransferase 23 family. Requires Mn(2+) as cofactor. Mg(2+) serves as cofactor.

It localises to the golgi apparatus. The protein localises to the golgi stack membrane. The catalysed reaction is N(4)-{beta-D-GlcNAc-(1-&gt;2)-alpha-D-Man-(1-&gt;3)-[beta-D-GlcNAc-(1-&gt;2)-alpha-D-Man-(1-&gt;6)]-beta-D-Man-(1-&gt;4)-beta-D-GlcNAc-(1-&gt;4)-beta-D-GlcNAc}-L-asparaginyl-[protein] + GDP-beta-L-fucose = an N(4)-{beta-D-GlcNAc-(1-&gt;2)-alpha-D-Man-(1-&gt;3)-[beta-D-GlcNAc-(1-&gt;2)-alpha-D-Man-(1-&gt;6)]-beta-D-Man-(1-&gt;4)-beta-D-GlcNAc-(1-&gt;4)-[alpha-L-Fuc-(1-&gt;6)]-beta-D-GlcNAc}-L-asparaginyl-[protein] + GDP + H(+). It participates in protein modification; protein glycosylation. With respect to regulation, inhibited by Fe(3+), Ni(2+) and Cu(2+). In terms of biological role, catalyzes the addition of fucose in alpha 1-6 linkage to the first GlcNAc residue, next to the peptide chains in N-glycans. The addition is prevented if the GlcNAc residue is already fucosylated. Involved in susceptibility to the nematotoxic C.cinerea galectin Cgl2, likely by contributing to the synthesis of core alpha-1,6-fucosylated N-glycans to which Cgl2 binds. This chain is Alpha-(1,6)-fucosyltransferase, found in Caenorhabditis elegans.